A 146-amino-acid chain; its full sequence is Hemoglobin subunit beta (146 aa).

In terms of domain architecture, Globin spans 2-146; it reads HWSAEEKQLI…VAHALARKYH (145 aa). Heme b-binding residues include His-63 and His-92.

Belongs to the globin family. Heterotetramer of two alpha chains and two beta chains. As to expression, red blood cells.

Functionally, involved in oxygen transport from the lung to the various peripheral tissues. This is Hemoglobin subunit beta (HBB) from Anser anser anser (Western greylag goose).